We begin with the raw amino-acid sequence, 329 residues long: Beta-ketoacyl-[acyl-carrier-protein] synthase III (329 aa).

Active-site residues include cysteine 123 and histidine 256. Positions 257-261 (QANIR) are ACP-binding. Asparagine 286 is a catalytic residue.

It belongs to the thiolase-like superfamily. FabH family. Homodimer.

The protein localises to the cytoplasm. The catalysed reaction is malonyl-[ACP] + acetyl-CoA + H(+) = 3-oxobutanoyl-[ACP] + CO2 + CoA. It participates in lipid metabolism; fatty acid biosynthesis. Catalyzes the condensation reaction of fatty acid synthesis by the addition to an acyl acceptor of two carbons from malonyl-ACP. Catalyzes the first condensation reaction which initiates fatty acid synthesis and may therefore play a role in governing the total rate of fatty acid production. Possesses both acetoacetyl-ACP synthase and acetyl transacylase activities. Its substrate specificity determines the biosynthesis of branched-chain and/or straight-chain of fatty acids. The polypeptide is Beta-ketoacyl-[acyl-carrier-protein] synthase III (Burkholderia pseudomallei (strain 1710b)).